A 228-amino-acid chain; its full sequence is Cytokinin riboside 5'-monophosphate phosphoribohydrolase LOG5 (228 aa).

Substrate is bound by residues Glu79, 97-98, and 114-120; these read RK and GYGTLEE.

This sequence belongs to the LOG family. In terms of tissue distribution, expressed in roots and shoots. Detected in vascular tissues of roots, cotyledons, and leaves, axillary buds, immature and mature flowers, fruit abscission zones and ovules.

Its subcellular location is the cytoplasm. The protein localises to the nucleus. It catalyses the reaction N(6)-(dimethylallyl)adenosine 5'-phosphate + H2O = N(6)-dimethylallyladenine + D-ribose 5-phosphate. It carries out the reaction 9-ribosyl-trans-zeatin 5'-phosphate + H2O = trans-zeatin + D-ribose 5-phosphate. In terms of biological role, cytokinin-activating enzyme working in the direct activation pathway. Phosphoribohydrolase that converts inactive cytokinin nucleotides to the biologically active free-base forms. This is Cytokinin riboside 5'-monophosphate phosphoribohydrolase LOG5 (LOG5) from Arabidopsis thaliana (Mouse-ear cress).